Reading from the N-terminus, the 185-residue chain is Threonylcarbamoyl-AMP synthase (185 aa).

Residues 1–185 (MKNLNQVVDA…AKTGNTLRQG (185 aa)) form the YrdC-like domain.

This sequence belongs to the SUA5 family. TsaC subfamily.

The protein resides in the cytoplasm. It catalyses the reaction L-threonine + hydrogencarbonate + ATP = L-threonylcarbamoyladenylate + diphosphate + H2O. Its function is as follows. Required for the formation of a threonylcarbamoyl group on adenosine at position 37 (t(6)A37) in tRNAs that read codons beginning with adenine. Catalyzes the conversion of L-threonine, HCO(3)(-)/CO(2) and ATP to give threonylcarbamoyl-AMP (TC-AMP) as the acyladenylate intermediate, with the release of diphosphate. This is Threonylcarbamoyl-AMP synthase from Aliivibrio fischeri (strain ATCC 700601 / ES114) (Vibrio fischeri).